The chain runs to 148 residues: Deoxyuridine 5'-triphosphate nucleotidohydrolase (148 aa).

Residues 67–69, N80, 84–86, and M94 each bind substrate; these read RSG and LID.

The protein belongs to the dUTPase family. Mg(2+) serves as cofactor.

It carries out the reaction dUTP + H2O = dUMP + diphosphate + H(+). The protein operates within pyrimidine metabolism; dUMP biosynthesis; dUMP from dCTP (dUTP route): step 2/2. Its function is as follows. This enzyme is involved in nucleotide metabolism: it produces dUMP, the immediate precursor of thymidine nucleotides and it decreases the intracellular concentration of dUTP so that uracil cannot be incorporated into DNA. This Paraburkholderia phytofirmans (strain DSM 17436 / LMG 22146 / PsJN) (Burkholderia phytofirmans) protein is Deoxyuridine 5'-triphosphate nucleotidohydrolase.